A 221-amino-acid polypeptide reads, in one-letter code: Thiamine-phosphate synthase (221 aa).

4-amino-2-methyl-5-(diphosphooxymethyl)pyrimidine contacts are provided by residues 46–50 (QFREK) and Asn82. Positions 83 and 102 each coordinate Mg(2+). Ser121 contributes to the 4-amino-2-methyl-5-(diphosphooxymethyl)pyrimidine binding site. Position 148-150 (148-150 (TQS)) interacts with 2-[(2R,5Z)-2-carboxy-4-methylthiazol-5(2H)-ylidene]ethyl phosphate. Lys151 lines the 4-amino-2-methyl-5-(diphosphooxymethyl)pyrimidine pocket. 2-[(2R,5Z)-2-carboxy-4-methylthiazol-5(2H)-ylidene]ethyl phosphate is bound by residues Gly180 and 200–201 (IS).

The protein belongs to the thiamine-phosphate synthase family. Requires Mg(2+) as cofactor.

The catalysed reaction is 2-[(2R,5Z)-2-carboxy-4-methylthiazol-5(2H)-ylidene]ethyl phosphate + 4-amino-2-methyl-5-(diphosphooxymethyl)pyrimidine + 2 H(+) = thiamine phosphate + CO2 + diphosphate. It catalyses the reaction 2-(2-carboxy-4-methylthiazol-5-yl)ethyl phosphate + 4-amino-2-methyl-5-(diphosphooxymethyl)pyrimidine + 2 H(+) = thiamine phosphate + CO2 + diphosphate. It carries out the reaction 4-methyl-5-(2-phosphooxyethyl)-thiazole + 4-amino-2-methyl-5-(diphosphooxymethyl)pyrimidine + H(+) = thiamine phosphate + diphosphate. It participates in cofactor biosynthesis; thiamine diphosphate biosynthesis; thiamine phosphate from 4-amino-2-methyl-5-diphosphomethylpyrimidine and 4-methyl-5-(2-phosphoethyl)-thiazole: step 1/1. Condenses 4-methyl-5-(beta-hydroxyethyl)thiazole monophosphate (THZ-P) and 2-methyl-4-amino-5-hydroxymethyl pyrimidine pyrophosphate (HMP-PP) to form thiamine monophosphate (TMP). The protein is Thiamine-phosphate synthase of Pasteurella multocida (strain Pm70).